Here is a 225-residue protein sequence, read N- to C-terminus: Claudin-8 (225 aa).

At Met-1 to Gln-7 the chain is on the cytoplasmic side. Residues Met-8–Pro-28 traverse the membrane as a helical segment. Topologically, residues Gln-29 to Arg-81 are extracellular. The chain crosses the membrane as a helical span at residues Gly-82–Met-102. The Cytoplasmic portion of the chain corresponds to Lys-103–Arg-117. A helical transmembrane segment spans residues Ile-118 to Ser-138. Residues Trp-139–Tyr-166 are Extracellular-facing. The helical transmembrane segment at Ile-167–Cys-187 threads the bilayer. The Cytoplasmic segment spans residues Cys-188–Val-225. A Glycyl lysine isopeptide (Lys-Gly) (interchain with G-Cter in ubiquitin) cross-link involves residue Lys-213. The segment at Tyr-224 to Val-225 is interactions with TJP1, TJP2 and TJP3.

The protein belongs to the claudin family. Can form heteropolymeric strands with other claudins. Interacts with CLDN4. Directly interacts with TJP1/ZO-1, TJP2/ZO-2 and TJP3/ZO-3. Interacts with KLHL3. Post-translationally, ubiquitinated by the BCR(KLHL3) E3 ubiquitin ligase complex in the kidney, leading to its degradation. Expressed primarily in lung and kidney. Present in both cortical and medullar collecting ducts (at protein level).

Its subcellular location is the cell junction. It is found in the tight junction. The protein resides in the cell membrane. It carries out the reaction chloride(in) = chloride(out). The enzyme catalyses bromide(in) = bromide(out). It catalyses the reaction iodide(out) = iodide(in). The catalysed reaction is fluoride(in) = fluoride(out). In terms of biological role, can associate with other claudins to regulate tight junction structural and functional strand dynamics. May coassemble with CLDN4 into tight junction strands containing anion-selective channels that convey paracellular chloride permeability in renal collecting ducts. Cannot form tight junction strands on its own. This Mus musculus (Mouse) protein is Claudin-8.